The following is a 348-amino-acid chain: Dihydroorotate dehydrogenase (quinone) (348 aa).

Residues 60–64 and Thr84 each bind FMN; that span reads AGLDK. Lys64 contributes to the substrate binding site. 109 to 113 contacts substrate; that stretch reads NRMGF. FMN is bound by residues Asn137 and Asn170. Asn170 contacts substrate. The Nucleophile role is filled by Ser173. Asn175 lines the substrate pocket. Residues Lys215 and Thr243 each coordinate FMN. A substrate-binding site is contributed by 244–245; it reads NT. FMN contacts are provided by residues Gly266, Gly295, and 316-317; that span reads YS.

The protein belongs to the dihydroorotate dehydrogenase family. Type 2 subfamily. Monomer. FMN serves as cofactor.

It is found in the cell membrane. The enzyme catalyses (S)-dihydroorotate + a quinone = orotate + a quinol. It participates in pyrimidine metabolism; UMP biosynthesis via de novo pathway; orotate from (S)-dihydroorotate (quinone route): step 1/1. Catalyzes the conversion of dihydroorotate to orotate with quinone as electron acceptor. In Nitrosospira multiformis (strain ATCC 25196 / NCIMB 11849 / C 71), this protein is Dihydroorotate dehydrogenase (quinone).